We begin with the raw amino-acid sequence, 83 residues long: RNA-binding protein Hfq (83 aa).

A Sm domain is found at 9 to 68; sequence DPYLNILRKERIPVSIFLVNGIKLQGQIESFDQFVILLRNTVSQMVYKHAISTVVPSRNV.

Belongs to the Hfq family. In terms of assembly, homohexamer.

In terms of biological role, RNA chaperone that binds small regulatory RNA (sRNAs) and mRNAs to facilitate mRNA translational regulation in response to envelope stress, environmental stress and changes in metabolite concentrations. Also binds with high specificity to tRNAs. This chain is RNA-binding protein Hfq, found in Chromohalobacter salexigens (strain ATCC BAA-138 / DSM 3043 / CIP 106854 / NCIMB 13768 / 1H11).